Here is a 520-residue protein sequence, read N- to C-terminus: Hydroxymethylglutaryl-CoA synthase, cytoplasmic (520 aa).

Position 4 is a phosphoserine (serine 4). The (3S)-3-hydroxy-3-methylglutaryl-CoA site is built by aspartate 43 and alanine 44. 44–46 lines the CoA pocket; that stretch reads AGK. Lysine 46 is subject to N6-acetyllysine. Glutamate 95 functions as the Proton donor/acceptor in the catalytic mechanism. (3S)-3-hydroxy-3-methylglutaryl-CoA is bound by residues cysteine 129, asparagine 167, threonine 171, serine 221, and histidine 264. Cysteine 129 serves as the catalytic Acyl-thioester intermediate. Asparagine 167 provides a ligand contact to CoA. Serine 221 provides a ligand contact to CoA. The active-site Proton donor/acceptor is histidine 264. Residues lysine 269 and lysine 273 each contribute to the CoA site. The (3S)-3-hydroxy-3-methylglutaryl-CoA site is built by lysine 273, asparagine 343, and serine 377. Position 273 is an N6-acetyllysine (lysine 273). The interval 486–520 is disordered; sequence SNTATEHIPSPAKKVPRLPATAAESESAVISNGEH. Residues serine 495 and serine 516 each carry the phosphoserine modification.

The protein belongs to the thiolase-like superfamily. HMG-CoA synthase family. As to quaternary structure, homodimer.

It localises to the cytoplasm. It catalyses the reaction acetoacetyl-CoA + acetyl-CoA + H2O = (3S)-3-hydroxy-3-methylglutaryl-CoA + CoA + H(+). It functions in the pathway metabolic intermediate biosynthesis; (R)-mevalonate biosynthesis; (R)-mevalonate from acetyl-CoA: step 2/3. Functionally, this enzyme condenses acetyl-CoA with acetoacetyl-CoA to form HMG-CoA, which is converted by HMG-CoA reductase (HMGCR) into mevalonate, a precursor for cholesterol synthesis. In Cricetulus griseus (Chinese hamster), this protein is Hydroxymethylglutaryl-CoA synthase, cytoplasmic.